Here is a 743-residue protein sequence, read N- to C-terminus: UvrABC system protein C (743 aa).

One can recognise a GIY-YIG domain in the interval 16–95 (VDPGVYKFRD…IKEFDPRFNV (80 aa)). The UVR domain occupies 208–243 (DKLVRQLEARMQQASEELDFETAARLRDDVGALRRA). Disordered stretches follow at residues 497 to 543 (AEAA…QTGR) and 694 to 743 (PSAD…TGVE). The segment covering 506 to 520 (QASDTDGDQVSDTDG) has biased composition (acidic residues). Residues 734 to 743 (QSASQRTGVE) show a composition bias toward polar residues.

It belongs to the UvrC family. Interacts with UvrB in an incision complex.

Its subcellular location is the cytoplasm. In terms of biological role, the UvrABC repair system catalyzes the recognition and processing of DNA lesions. UvrC both incises the 5' and 3' sides of the lesion. The N-terminal half is responsible for the 3' incision and the C-terminal half is responsible for the 5' incision. In Rhodococcus opacus (strain B4), this protein is UvrABC system protein C.